We begin with the raw amino-acid sequence, 73 residues long: Salivary protein FS48 (73 aa).

The N-terminal stretch at 1 to 21 (MKFAFAIFVVLAILHTELISA) is a signal peptide.

Its subcellular location is the secreted. Salivary protein that inhibits host voltage-gated potassium channels Kv1.1/KCNA1, Kv1.2/KCNA2 and Kv1.3/KCNA3 likely via a voltage-independent pore-blocking mechanism. Suppresses expression of the Kv1.3/KCNA3 channel in lipopolysaccharide (LPS)-stimulated mouse macrophages and human T-cells. Down-regulates secretion of nitric oxide (NO) and inflammatory cytokines, such as TNF-alpha/TNF, IL-1beta/IL1B and IL6, in LPS-stimulated mouse macrophages in a manner dependent on Kv1.3/KCNA3 channel blockage. Reduces activation of MAPK and NF-kappa-B signaling pathways in LPS-stimulated mouse macrophages. Modulates intracellular Ca(2+) signaling in human PMA/ionomycin-triggered T-cells. Interferes with the activation of the MAPK, NF-kappa-B and NFATc1 pathways in human PMA/ionomycin-triggered T-cells. Reduces proliferation of human PMA/ionomycin-triggered T-cells. Down-regulates secretion of cytokines, such as TNF-alpha/TNF and IL2, in human PMA/ionomycin-triggered T-cells. In Xenopsylla cheopis (Oriental rat flea), this protein is Salivary protein FS48.